The following is a 143-amino-acid chain: Ribosome maturation factor RimP (143 aa).

Belongs to the RimP family.

It is found in the cytoplasm. Functionally, required for maturation of 30S ribosomal subunits. In Borrelia recurrentis (strain A1), this protein is Ribosome maturation factor RimP.